Here is a 233-residue protein sequence, read N- to C-terminus: Ribose-5-phosphate isomerase A (233 aa).

Residues Ser28 to Thr31, Asp83 to Asp86, and Lys96 to Gly99 each bind substrate. The active-site Proton acceptor is the Glu105. Lys123 provides a ligand contact to substrate.

It belongs to the ribose 5-phosphate isomerase family. In terms of assembly, homodimer.

The catalysed reaction is aldehydo-D-ribose 5-phosphate = D-ribulose 5-phosphate. Its pathway is carbohydrate degradation; pentose phosphate pathway; D-ribose 5-phosphate from D-ribulose 5-phosphate (non-oxidative stage): step 1/1. Its function is as follows. Catalyzes the reversible conversion of ribose-5-phosphate to ribulose 5-phosphate. The polypeptide is Ribose-5-phosphate isomerase A (Maricaulis maris (strain MCS10) (Caulobacter maris)).